A 373-amino-acid polypeptide reads, in one-letter code: Probable tRNA sulfurtransferase (373 aa).

One can recognise a THUMP domain in the interval 54–158; sequence NKNIEELSKV…NDVAYFYHKI (105 aa). ATP is bound by residues 176-177, 201-202, lysine 256, glycine 278, and glutamine 287; these read LF and NF.

The protein belongs to the ThiI family.

It localises to the cytoplasm. The enzyme catalyses [ThiI sulfur-carrier protein]-S-sulfanyl-L-cysteine + a uridine in tRNA + 2 reduced [2Fe-2S]-[ferredoxin] + ATP + H(+) = [ThiI sulfur-carrier protein]-L-cysteine + a 4-thiouridine in tRNA + 2 oxidized [2Fe-2S]-[ferredoxin] + AMP + diphosphate. It carries out the reaction [ThiS sulfur-carrier protein]-C-terminal Gly-Gly-AMP + S-sulfanyl-L-cysteinyl-[cysteine desulfurase] + AH2 = [ThiS sulfur-carrier protein]-C-terminal-Gly-aminoethanethioate + L-cysteinyl-[cysteine desulfurase] + A + AMP + 2 H(+). Its pathway is cofactor biosynthesis; thiamine diphosphate biosynthesis. In terms of biological role, catalyzes the ATP-dependent transfer of a sulfur to tRNA to produce 4-thiouridine in position 8 of tRNAs, which functions as a near-UV photosensor. Also catalyzes the transfer of sulfur to the sulfur carrier protein ThiS, forming ThiS-thiocarboxylate. This is a step in the synthesis of thiazole, in the thiamine biosynthesis pathway. The sulfur is donated as persulfide by IscS. The protein is Probable tRNA sulfurtransferase of Saccharolobus islandicus (strain M.14.25 / Kamchatka #1) (Sulfolobus islandicus).